Consider the following 155-residue polypeptide: Ribosome maturation factor RimP (155 aa).

It belongs to the RimP family.

It localises to the cytoplasm. Its function is as follows. Required for maturation of 30S ribosomal subunits. The chain is Ribosome maturation factor RimP from Synechococcus sp. (strain CC9902).